The chain runs to 310 residues: Protein FAM153A (310 aa).

Disordered regions lie at residues 39–58 (LGVPQCERDEGSLGKPLCPP), 108–136 (QTNGDLEDLEEHGPGQTVSEEATEVHTME), 156–184 (SYNGEEEDPEEVKTSLGVPQRGDLEDLEE), and 250–297 (TITG…KKSR). A compositionally biased stretch (low complexity) spans 259-268 (SASPSSAPAE). Over residues 270 to 282 (ATEKTKVEEEVKT) the composition is skewed to basic and acidic residues. Over residues 283 to 297 (RKPKKKTRKPSKKSR) the composition is skewed to basic residues.

It belongs to the FAM153 family.

In Homo sapiens (Human), this protein is Protein FAM153A (FAM153A).